The following is an 83-amino-acid chain: Small ribosomal subunit protein bS16 (83 aa).

Belongs to the bacterial ribosomal protein bS16 family.

The polypeptide is Small ribosomal subunit protein bS16 (Shewanella putrefaciens (strain CN-32 / ATCC BAA-453)).